Here is a 284-residue protein sequence, read N- to C-terminus: Genome polyprotein (284 aa).

2 disordered regions span residues 16–57 and 255–284; these read HQAN…GTSG and GIST…GKNM. Residues 35–44 are compositionally biased toward polar residues; it reads EQSSIQSNLS.

It belongs to the potyviridae genome polyprotein family. In terms of processing, genome polyprotein of potyviruses undergoes post-translational proteolytic processing by the main proteinase NIa-pro resulting in the production of at least ten individual proteins. The P1 proteinase and the HC-pro cleave only their respective C-termini autocatalytically. 6K1 is essential for proper proteolytic separation of P3 from CI.

It localises to the virion. The enzyme catalyses RNA(n) + a ribonucleoside 5'-triphosphate = RNA(n+1) + diphosphate. An RNA-dependent RNA polymerase that plays an essential role in the virus replication. In terms of biological role, involved in aphid transmission, cell-to-cell and systemis movement, encapsidation of the viral RNA and in the regulation of viral RNA amplification. This chain is Genome polyprotein, found in Capsicum (peppers).